The sequence spans 547 residues: Phospholipase DDHD1 (547 aa).

The active site involves S184. The region spanning 258-533 is the DDHD domain; the sequence is LKFKVENFFC…ALFLLTFMYK (276 aa). Residue S370 is modified to Phosphoserine. The disordered stretch occupies residues 414-448; it reads RSSASQPSEPSKDSLEDDKKPSASPSTTTVATQTL. Basic and acidic residues predominate over residues 423–434; the sequence is PSKDSLEDDKKP. Positions 435–448 are enriched in low complexity; it reads SASPSTTTVATQTL.

The protein belongs to the PA-PLA1 family. In terms of assembly, forms homooligomers and, to a much smaller extent, heterooligomers with DDHD2. Interacts with SEC23A and SEC24C. As to expression, predominantly expressed in testis, in round and elongating spermatids, but not in spermatocytes (at protein level). Also expressed in the brain, and at lower levels in other tissues such as thymus and lung (at protein level).

It is found in the cytoplasm. It carries out the reaction a 1,2-diacyl-sn-glycero-3-phosphate + H2O = a 2-acyl-sn-glycerol 3-phosphate + a fatty acid + H(+). The catalysed reaction is a 1,2-diacyl-sn-glycero-3-phospho-(1D-myo-inositol) + H2O = a 2-acyl-sn-glycero-3-phospho-D-myo-inositol + a fatty acid + H(+). It catalyses the reaction 1-octadecanoyl-2-(5Z,8Z,11Z,14Z-eicosatetraenoyl)-sn-glycero-3-phospho-(1D-myo-inositol) + H2O = 2-(5Z,8Z,11Z,14Z-eicosatetraenoyl)-sn-glycero-3-phospho-(1D-myo-inositol) + octadecanoate + H(+). The enzyme catalyses a 1-acyl-2-(5Z,8Z,11Z,14Z-eicosatetraenoyl)-sn-glycero-3-phospho-(1D-myo-inositol) + H2O = 2-(5Z,8Z,11Z,14Z-eicosatetraenoyl)-sn-glycero-3-phospho-(1D-myo-inositol) + a fatty acid + H(+). It carries out the reaction 1,2-dihexadecanoyl-sn-glycero-3-phospho-(1D-myo-inositol) + H2O = 2-hexadecanoyl-sn-glycero-3-phospho-(1D-myo-inositol) + hexadecanoate + H(+). The catalysed reaction is a 1-acyl-2-(5Z,8Z,11Z,14Z)-eicosatetraenoyl-sn-glycero-3-phosphate + H2O = 2-(5Z,8Z,11Z,14Z-eicosatetraenoyl)-sn-glycero-3-phosphate + a fatty acid + H(+). It catalyses the reaction 1-(9Z-octadecenoyl)-2-(7Z,10Z,13Z,16Z,19Z-docosapentaenoyl)-sn-glycero-3-phospho-1D-myo-inositol + H2O = 2-(7Z,10Z,13Z,16Z,19Z-docosapentaenoyl)-sn-glycero-3-phospho-1D-myo-inositol + (9Z)-octadecenoate + H(+). The enzyme catalyses 1-(9Z-octadecenoyl)-2-(5Z,8Z,11Z,14Z-eicosatetraenoyl)-sn-glycero-3-phospho-1D-myo-inositol + H2O = 2-(5Z,8Z,11Z,14Z-eicosatetraenoyl)-sn-glycero-3-phospho-(1D-myo-inositol) + (9Z)-octadecenoate + H(+). It carries out the reaction 1,2-di-(9Z-octadecenoyl)-sn-glycero-3-phospho-1D-myo-inositol + H2O = 2-(9Z-octadecenoyl)-sn-glycero-3-phospho-1D-myo-inositol + (9Z)-octadecenoate + H(+). The catalysed reaction is 1-(9Z-octadecenoyl)-2-(8Z,11Z,14Z-eicosatrienoyl)-sn-glycero-3-phospho-1D-myo-inositol + H2O = 2-(8Z,11Z,14Z-eicosatrienoyl)-sn-glycero-3-phospho-1D-myo-inositol + (9Z)-octadecenoate + H(+). It catalyses the reaction 1,2-di-(9Z-octadecenoyl)-sn-glycero-3-phosphate + H2O = 2-(9Z-octadecenoyl)-sn-glycero-3-phosphate + (9Z)-octadecenoate + H(+). The enzyme catalyses 1-hexadecanoyl-2-(9Z-octadecenoyl)-sn-glycero-3-phosphate + H2O = 2-(9Z-octadecenoyl)-sn-glycero-3-phosphate + hexadecanoate + H(+). It carries out the reaction 1-hexadecanoyl-2-(9Z-octadecenoyl)-sn-glycero-3-phospho-L-serine + H2O = 2-(9Z-octadecenoyl)-sn-glycero-3-phospho-L-serine + hexadecanoate + H(+). The catalysed reaction is 1,2-di-(5Z,8Z,11Z,14Z)-eicosatetraenoyl-sn-glycero-3-phosphate + H2O = 2-(5Z,8Z,11Z,14Z-eicosatetraenoyl)-sn-glycero-3-phosphate + (5Z,8Z,11Z,14Z)-eicosatetraenoate + H(+). It catalyses the reaction 1-octadecanoyl-2-(5Z,8Z,11Z,14Z-eicosatetraenoyl)-sn-glycero-3-phosphate + H2O = 2-(5Z,8Z,11Z,14Z-eicosatetraenoyl)-sn-glycero-3-phosphate + octadecanoate + H(+). The enzyme catalyses a 1,2-diacyl-sn-glycero-3-phospho-L-serine + H2O = a 2-acyl-sn-glycero-3-phospho-L-serine + a fatty acid + H(+). It carries out the reaction a 1,2-diacyl-sn-glycero-3-phosphocholine + H2O = a 2-acyl-sn-glycero-3-phosphocholine + a fatty acid + H(+). The catalysed reaction is 1,2-di-(9Z-octadecenoyl)-sn-glycero-3-phosphocholine + H2O = (9Z-octadecenoyl)-sn-glycero-3-phosphocholine + (9Z)-octadecenoate + H(+). It catalyses the reaction a 1,2-diacyl-sn-glycero-3-phosphoethanolamine + H2O = a 2-acyl-sn-glycero-3-phosphoethanolamine + a fatty acid + H(+). The enzyme catalyses a 1,2-diacyl-sn-glycero-3-phospho-(1'-sn-glycerol) + H2O = 2-acyl-sn-glycero-3-phospho-(1'-sn-glycerol) + a fatty acid + H(+). It carries out the reaction 1-hexadecanoyl-2-(9Z-octadecenoyl)-sn-glycero-3-phospho-(1'-sn-glycerol) + H2O = 2-(9Z-octadecenoyl)-sn-glycero-3-phospho-(1'-sn-glycerol) + hexadecanoate + H(+). The catalysed reaction is 1-acyl-2-(5Z,8Z,11Z,14Z-eicosatetraenoyl)-sn-glycero-3-phosphocholine + H2O = 2-(5Z,8Z,11Z,14Z)-eicosatetraenoyl-sn-glycero-3-phosphocholine + a fatty acid + H(+). It catalyses the reaction 1-acyl-2-(5Z,8Z,11Z,14Z)-eicosatetraenoyl-sn-glycero-3-phosphoethanolamine + H2O = 2-(5Z,8Z,11Z,14Z)-eicosatetraenoyl-sn-glycero-3-phosphoethanolamine + a fatty acid + H(+). It functions in the pathway phospholipid metabolism; phosphatidylinositol metabolism. Its function is as follows. Phospholipase A1 (PLA1) that hydrolyzes ester bonds at the sn-1 position of glycerophospholipids producing a free fatty acid and a lysophospholipid. Prefers phosphatidate (1,2-diacyl-sn-glycero-3-phosphate, PA) as substrate in vitro, but can efficiently hydrolyze phosphatidylinositol (1,2-diacyl-sn-glycero-3-phospho-(1D-myo-inositol), PI), as well as a range of other glycerophospholipid substrates such as phosphatidylcholine (1,2-diacyl-sn-glycero-3-phosphocholine, PC), phosphatidylethanolamine (1,2-diacyl-sn-glycero-3-phosphoethanolamine, PE), phosphatidylserine (1,2-diacyl-sn-glycero-3-phospho-L-serine, PS) and phosphatidylglycerol (1,2-diacyl-sn-glycero-3-phospho-(1'-sn-glycerol), PG). Involved in the regulation of the endogenous content of polyunsaturated PI and PS lipids in the nervous system. Changes in these lipids extend to downstream metabolic products like PI phosphates PIP and PIP2, which play fundamental roles in cell biology. Regulates mitochondrial morphology. These dynamic changes may be due to PA hydrolysis at the mitochondrial surface. May play a regulatory role in spermatogenesis or sperm function. The sequence is that of Phospholipase DDHD1 from Mus musculus (Mouse).